A 51-amino-acid polypeptide reads, in one-letter code: Zinc metalloproteinase-disintegrin-like crovidisin (51 aa).

In terms of domain architecture, Peptidase M12B spans 1–12 (AMVTKNNGDLDK). Positions 13 to 18 (SGTECR) constitute a Disintegrin domain. A glycan (N-linked (GlcNAc...) asparagine) is linked at Asn-29.

The protein belongs to the venom metalloproteinase (M12B) family. P-III subfamily. P-IIIa sub-subfamily. Monomer. The cofactor is Zn(2+). In terms of tissue distribution, expressed by the venom gland.

It is found in the secreted. Snake venom zinc metalloproteinase-disintegrin-like that blocks the interaction between platelets and collagen fibers through its binding to collagen fibers, resulting in the blockade of collagen-mediated platelet functions such as adhesion, release reaction, thromboxane formation, and aggregation. Binds selectively to collagen type I with high affinity. Also exerts proteolytic activity to matrix. The protein is Zinc metalloproteinase-disintegrin-like crovidisin of Crotalus viridis viridis (Prairie rattlesnake).